The following is a 170-amino-acid chain: Adenine phosphoribosyltransferase (170 aa).

It belongs to the purine/pyrimidine phosphoribosyltransferase family. As to quaternary structure, homodimer.

The protein resides in the cytoplasm. The enzyme catalyses AMP + diphosphate = 5-phospho-alpha-D-ribose 1-diphosphate + adenine. It functions in the pathway purine metabolism; AMP biosynthesis via salvage pathway; AMP from adenine: step 1/1. Its function is as follows. Catalyzes a salvage reaction resulting in the formation of AMP, that is energically less costly than de novo synthesis. The polypeptide is Adenine phosphoribosyltransferase (Thermosynechococcus vestitus (strain NIES-2133 / IAM M-273 / BP-1)).